Here is a 199-residue protein sequence, read N- to C-terminus: Small ribosomal subunit protein uS7 (199 aa).

The protein belongs to the universal ribosomal protein uS7 family. Part of the 30S ribosomal subunit.

One of the primary rRNA binding proteins, it binds directly to 16S rRNA where it nucleates assembly of the head domain of the 30S subunit. Is located at the subunit interface close to the decoding center. In Cenarchaeum symbiosum (strain A), this protein is Small ribosomal subunit protein uS7.